A 282-amino-acid chain; its full sequence is MAHQLKLLKDDFFASDQQAVAVADRYPQDVFAEHTHDFCELVIVWRGNGLHVLNDRPYRITRGDLFYIHADDKHSYASVNDLVLQNIIYCPERLKLNLDWQGAIPGFNASAGQPHWRLGSVGMAQARQVIGQLEHESSQHVPFANEMAELLFGQLVMLLNRHRYTSDSLPPTSSETLLDKLITRLAASLKSPFALDKFCDEASCSERVLRQQFRQQTGMTINQYLRQVRVCHAQYLLQHSRLLISDISTECGFEDSNYFSVVFTRETGMTPSQWRHLNSQKD.

The HTH araC/xylS-type domain maps to 179 to 277; sequence DKLITRLAAS…GMTPSQWRHL (99 aa). 2 DNA-binding regions (H-T-H motif) span residues 196 to 217 and 244 to 267; these read DKFC…RQQT and ISDI…TRET.

Binds DNA as a dimer.

It is found in the cytoplasm. Functionally, activates expression of the rhaSR operon in response to L-rhamnose. The polypeptide is HTH-type transcriptional activator RhaR (Escherichia coli O1:K1 / APEC).